The following is a 105-amino-acid chain: Probable tetrachloroethene reductive dehalogenase membrane anchor protein (105 aa).

3 helical membrane-spanning segments follow: residues 3–23 (IYDV…QYGI), 35–55 (IPLQ…LAWG), and 66–86 (AIGM…IITY).

The protein belongs to the PceB family.

The protein resides in the cell membrane. May act as a membrane anchor for the tetrachloroethene reductive dehalogenase PceA. The polypeptide is Probable tetrachloroethene reductive dehalogenase membrane anchor protein (Desulfitobacterium hafniense (Desulfitobacterium frappieri)).